The sequence spans 168 residues: HTH-type transcriptional regulator IscR (168 aa).

The region spanning 2–131 (KLTSKGRYAV…NNITLGELMK (130 aa)) is the HTH rrf2-type domain. A DNA-binding region (H-T-H motif) is located at residues 28 to 51 (LADISERQGISLSYLEQLFSKLRK). The [2Fe-2S] cluster site is built by Cys92, Cys98, and Cys104.

Requires [2Fe-2S] cluster as cofactor.

In terms of biological role, regulates the transcription of several operons and genes involved in the biogenesis of Fe-S clusters and Fe-S-containing proteins. The chain is HTH-type transcriptional regulator IscR from Vibrio campbellii (strain ATCC BAA-1116).